Here is a 256-residue protein sequence, read N- to C-terminus: Probable fructose-2,6-bisphosphatase TIGAR A (256 aa).

Histidine 11 acts as the Tele-phosphohistidine intermediate in catalysis. Glutamate 89 serves as the catalytic Proton donor/acceptor. Residues 147–170 (HQDKVQDGGTSSADESTEAPAGLA) form a disordered region.

This sequence belongs to the phosphoglycerate mutase family.

The protein resides in the cytoplasm. The protein localises to the nucleus. It localises to the mitochondrion. The catalysed reaction is beta-D-fructose 2,6-bisphosphate + H2O = beta-D-fructose 6-phosphate + phosphate. Functionally, fructose-bisphosphatase hydrolyzing fructose-2,6-bisphosphate as well as fructose-1,6-bisphosphate. Acts as a negative regulator of glycolysis by lowering intracellular levels of fructose-2,6-bisphosphate in a p53/TP53-dependent manner, resulting in the pentose phosphate pathway (PPP) activation and NADPH production. Contributes to the generation of reduced glutathione to cause a decrease in intracellular reactive oxygen species (ROS) content, correlating with its ability to protect cells from oxidative or metabolic stress-induced cell death. May play a role in mitophagy inhibition. In Danio rerio (Zebrafish), this protein is Probable fructose-2,6-bisphosphatase TIGAR A.